The sequence spans 430 residues: RNA polymerase-associated protein LEO1 (430 aa).

A compositionally biased stretch (polar residues) spans 1–10; it reads MSSSEGNSDA. The disordered stretch occupies residues 1-128; the sequence is MSSSEGNSDA…SRGSLNDLQG (128 aa). Positions 18 to 30 are enriched in low complexity; it reads KSSTPSSRGSSPD. The span at 99–119 shows a compositional bias: basic and acidic residues; it reads REGKPKESNTRARLSDSDAES. Coiled coils occupy residues 326-347 and 409-429; these read TRRE…RTQM and EEYR…DEES. Positions 349-430 are disordered; that stretch reads RNNFKVRGPR…QIVTSDEESD (82 aa).

This sequence belongs to the LEO1 family. In terms of assembly, component of the PAF1 complex which consists of at least cdc-73, ctr-9, leo-1, pafo-1 and rtfo-1.

It is found in the nucleus. The protein localises to the cytoplasm. Functionally, component of the PAF1 complex which is a multifunctional complex involved in transcription initiation via genetic interactions with TATA-binding proteins, elongation and transcription-coupled histone modification. The sequence is that of RNA polymerase-associated protein LEO1 from Caenorhabditis elegans.